We begin with the raw amino-acid sequence, 217 residues long: Adenylate kinase (217 aa).

10-15 (GAGKGT) is an ATP binding site. The NMP stretch occupies residues 30 to 59 (STGDMLRAAVKAGTEMGLAAKKVMDAGGLV). Residues Thr31, Arg36, 57–59 (GLV), 85–88 (GFPR), and Gln92 each bind AMP. The interval 122 to 159 (GRRSHPASGRTYHVKFNPPKVDGVDDVTGEPLVQRDDD) is LID. ATP is bound by residues Arg123 and 132–133 (TY). Arg156 and Arg167 together coordinate AMP. Gly203 is a binding site for ATP.

This sequence belongs to the adenylate kinase family. As to quaternary structure, monomer.

It is found in the cytoplasm. It carries out the reaction AMP + ATP = 2 ADP. It participates in purine metabolism; AMP biosynthesis via salvage pathway; AMP from ADP: step 1/1. Functionally, catalyzes the reversible transfer of the terminal phosphate group between ATP and AMP. Plays an important role in cellular energy homeostasis and in adenine nucleotide metabolism. This Leptothrix cholodnii (strain ATCC 51168 / LMG 8142 / SP-6) (Leptothrix discophora (strain SP-6)) protein is Adenylate kinase.